The primary structure comprises 545 residues: MSGAAVFVDAVVAPLGDAVGAIGFGAAAALGYRNYRDTDAEAAFWMAFTFASLLGVTWTVSLMLEKAGVATQIFNLATGPLMATTVAVFAIGGTATLAIVEDMEALVEERAQRRQEAEEERAEAERAREKAEQKQAEAERQTAEAESAKQDARERSAEIEQLAADLESQATEVGATLEAASDGDLTARVDATTDNAEIAEVATVVNDMLTTMERTIDEIQGFSTNVTTASREATAGAKEIQDASQTVSESVQEIAAGTDDQREQLESVAEEMDSYSATVEEVAATAQSVADTAADTTDVATAGKQTAEDAIDAIDAVQETMQTTVANVDALEDLTTEIDDIAELISDIAEQTNMLALNANIEAARAGSGGGSNGDGFAVVADEVKELATESQRSAKDIAELIEEVQSQTATTVEEIRVAEQRVNDGAAAVEETVDAFGAVTENIQETTDGVQEISQAMDEQAQRSERVVSSVDDIATISQATADRAENVSAASEEQTASITEVTSSLQSLAAQADTLEDRLNEFRTEATGTAHGEATDAPAGQSD.

A run of 3 helical transmembrane segments spans residues A10–L30, F44–L64, and P80–V100. Positions A111–A157 are disordered. Residues E123–A157 are compositionally biased toward basic and acidic residues. The HAMP domain maps to A164–D217. The region spanning G236 to A476 is the Methyl-accepting transducer domain. E281 bears the Glutamate methyl ester (Glu) mark. Positions L521–D545 are disordered. Over residues E527–A539 the composition is skewed to low complexity.

Belongs to the methyl-accepting chemotaxis (MCP) protein family. Methylated by CheR.

It is found in the cell membrane. Its function is as follows. Potentially involved in chemo- or phototactic signal transduction. The polypeptide is Transducer protein Htr7 (htr7) (Halobacterium salinarum (strain ATCC 29341 / DSM 671 / R1)).